Here is a 367-residue protein sequence, read N- to C-terminus: Pectate lyase 1 (367 aa).

The first 21 residues, 1–21, serve as a signal peptide directing secretion; that stretch reads MASPCLVAVLVFLCAIVSCYS. 2 disulfide bridges follow: cysteine 28–cysteine 45 and cysteine 128–cysteine 147. Asparagine 148 carries an N-linked (GlcNAc...) asparagine glycan. Aspartate 170 contributes to the Ca(2+) binding site. Residue asparagine 178 is glycosylated (N-linked (GlcNAc...) asparagine). Ca(2+) is bound by residues aspartate 194 and aspartate 198. Arginine 250 is an active-site residue. Asparagine 293 is a glycosylation site (N-linked (GlcNAc...) asparagine). Cysteine 306 and cysteine 312 are disulfide-bonded.

It belongs to the polysaccharide lyase 1 family. Amb a subfamily. The cofactor is Ca(2+).

It carries out the reaction Eliminative cleavage of (1-&gt;4)-alpha-D-galacturonan to give oligosaccharides with 4-deoxy-alpha-D-galact-4-enuronosyl groups at their non-reducing ends.. Its pathway is glycan metabolism; pectin degradation; 2-dehydro-3-deoxy-D-gluconate from pectin: step 2/5. In terms of biological role, has pectate lyase activity. The protein is Pectate lyase 1 of Hesperocyparis arizonica (Arizona cypress).